Here is a 139-residue protein sequence, read N- to C-terminus: Large-conductance mechanosensitive channel (139 aa).

The next 2 helical transmembrane spans lie at 9–29 (AFAVKGNVVDMAVGIIIGAAF) and 79–99 (IQSVIDFVIVAFAIFMGVKAI).

This sequence belongs to the MscL family. In terms of assembly, homopentamer.

It localises to the cell inner membrane. Its function is as follows. Channel that opens in response to stretch forces in the membrane lipid bilayer. May participate in the regulation of osmotic pressure changes within the cell. This chain is Large-conductance mechanosensitive channel, found in Pseudomonas fluorescens (strain SBW25).